The following is a 539-amino-acid chain: Eukaryotic translation initiation factor 3 subunit L (539 aa).

In terms of domain architecture, PCI spans 302–514 (TFSSILLYIQ…IHIADTKVSH (213 aa)).

It belongs to the eIF-3 subunit L family. Component of the eukaryotic translation initiation factor 3 (eIF-3) complex.

It is found in the cytoplasm. Component of the eukaryotic translation initiation factor 3 (eIF-3) complex, which is involved in protein synthesis of a specialized repertoire of mRNAs and, together with other initiation factors, stimulates binding of mRNA and methionyl-tRNAi to the 40S ribosome. The eIF-3 complex specifically targets and initiates translation of a subset of mRNAs involved in cell proliferation. This Anopheles gambiae (African malaria mosquito) protein is Eukaryotic translation initiation factor 3 subunit L.